Here is a 205-residue protein sequence, read N- to C-terminus: Putative protein phosphatase inhibitor 2-like protein 1 (205 aa).

Disordered regions lie at residues 1-44 (MAAS…SKKS), 64-92 (GLMK…TETT), 107-148 (AEGL…TLHY), and 171-205 (VEEM…SRSS). Required for binding PPP1CC regions lie at residues 12 to 17 (KGILKD) and 43 to 55 (KSQK…ILAT). The segment covering 17 to 26 (DNTSTTSSMV) has biased composition (polar residues). Residues 30-44 (EHPRGSVHEQLSKKS) are compositionally biased toward basic and acidic residues. Thr73 carries the post-translational modification Phosphothreonine; by GSK3. 2 stretches are compositionally biased toward acidic residues: residues 80–91 (GDDEDACSDTET) and 121–130 (SSGEEDSDLS). Ser87 is subject to Phosphoserine; by CK2. Positions 131–144 (PEEREKKRQFEMRR) are enriched in basic and acidic residues. Positions 147–150 (HYNE) are required for binding PPP1CC catalytic center, displacing metal ions and inhibition of PPP1CC catalytic activity. Residues 182 to 205 (SMNTEESNQGSTASDQQQNKSRSS) are compositionally biased toward polar residues.

This sequence belongs to the protein phosphatase inhibitor 2 family.

Inhibitor of protein-phosphatase 1. The sequence is that of Putative protein phosphatase inhibitor 2-like protein 1 (PPP1R2P1) from Homo sapiens (Human).